We begin with the raw amino-acid sequence, 146 residues long: Small ribosomal subunit protein uS15 (146 aa).

This sequence belongs to the universal ribosomal protein uS15 family. In terms of assembly, part of the 30S ribosomal subunit.

This chain is Small ribosomal subunit protein uS15, found in Picrophilus torridus (strain ATCC 700027 / DSM 9790 / JCM 10055 / NBRC 100828 / KAW 2/3).